The sequence spans 163 residues: Epididymal-specific lipocalin-6 (163 aa).

Positions 1 to 20 are cleaved as a signal peptide; it reads MGGLLLAAFLALVSVPRAQA.

The protein belongs to the calycin superfamily. Lipocalin family. Predominantly expressed in epididymis.

It is found in the secreted. May play a role in male fertility. This Homo sapiens (Human) protein is Epididymal-specific lipocalin-6 (LCN6).